A 413-amino-acid chain; its full sequence is uncharacterized protein (413 aa).

The first 22 residues, 1–22 (MKKSKASALLWLFSLVGFMLHA), serve as a signal peptide directing secretion.

The protein localises to the periplasm. Functionally, may be involved in ulvan degradation. Ulvan is the main polysaccharide component of the Ulvales (green seaweed) cell wall. It is composed of disaccharide building blocks comprising 3-sulfated rhamnose (Rha3S) linked to D-glucuronic acid (GlcA), L-iduronic acid (IduA), or D-xylose (Xyl). This is an uncharacterized protein from Formosa agariphila (strain DSM 15362 / KCTC 12365 / LMG 23005 / KMM 3901 / M-2Alg 35-1).